A 227-amino-acid polypeptide reads, in one-letter code: Guanylate kinase (227 aa).

The Guanylate kinase-like domain maps to 21-199; the sequence is GNLFMVVAPS…ALAELECIVA (179 aa). 28–35 serves as a coordination point for ATP; it reads APSGAGKS.

This sequence belongs to the guanylate kinase family.

It localises to the cytoplasm. The catalysed reaction is GMP + ATP = GDP + ADP. In terms of biological role, essential for recycling GMP and indirectly, cGMP. This chain is Guanylate kinase, found in Burkholderia mallei (strain ATCC 23344).